We begin with the raw amino-acid sequence, 843 residues long: MVKFTADELRRIMDYKHNIRNMSVIAHVDHGKSTLTDSLVAAAGIIAQEVAGDVRMTDTRADEAERGITIKSTGISLYYEMTDESLKSFTGARDGNEYLINLIDSPGHVDFSSEVTAALRITDGALVVVDCIEGVCVQTETVLRQALGERIRPVLTVNKMDRCFLELQVDGEEAYQTFSRVIENANVIMATYEDPLLGDVQVYPEKGTVAFSAGLHGWAFTLTNFAKMYASKFGVVESKMMERLWGENFFDPATRKWSGKNTGSPTCKRGFVQFCYEPIKQIIATCMNDQKDKLWPMLAKLGVSMKNDEKELMGKPLMKRVMQTWLPASTALLEMMIFHLPSPHTAQRYRVENLYEGPLDDQYANAIRNCDPNGPLMLYVSKMIPASDKGRFFAFGRVFAGKVSTGMKVRIMGPNYIPGEKKDLYTKSVQRTVIWMGKRQETVEDVPCGNTVAMVGLDQFITKNATLTNEKEVDAHPIRAMKFSVSPVVRVAVQCKVASDLPKLVEGLKRLAKSDPMVVCTMEESGEHIVAGAGELHLEICLKDLQDDFMGGAEIIKSDPVVSFRETVCDRSTRTVMSKSPNKHNRLYMEARPMEEGLAEAIDDGRIGPRDDPKIRSKILAEEFGWDKDLAKKIWAFGPETTGPNMVVDMCKGVQYLNEIKDSVVAGFQWASKEGPLAEENMRGICFEVCDVVLHSDAIHRGGGQVIPTARRVIYASQITAKPRLLEPVYMVEIQAPEGALGGIYSVLNQKRGHVFEEMQRPGTPLYNIKAYLPVVESFGFSSQLRAATSGQAFPQCVFDHWEMMSSDPLEPGTQASVLVADIRKRKGLKEAMTPLSEFEDKL.

Residues 17 to 344 (HNIRNMSVIA…MMIFHLPSPH (328 aa)) enclose the tr-type G domain. GTP is bound by residues 26–33 (AHVDHGKS) and 158–161 (NKMD). His-700 carries the post-translational modification Diphthamide. Ser-837 carries the post-translational modification Phosphoserine.

It belongs to the TRAFAC class translation factor GTPase superfamily. Classic translation factor GTPase family. As to quaternary structure, may interact with glutaredoxins (Grxs). As to expression, expressed in root, stem, leaves, flowers and siliques.

The protein localises to the cytoplasm. It carries out the reaction GTP + H2O = GDP + phosphate + H(+). It functions in the pathway protein biosynthesis; polypeptide chain elongation. In terms of biological role, catalyzes the GTP-dependent ribosomal translocation step during translation elongation. During this step, the ribosome changes from the pre-translocational (PRE) to the post-translocational (POST) state as the newly formed A-site-bound peptidyl-tRNA and P-site-bound deacylated tRNA move to the P and E sites, respectively. Catalyzes the coordinated movement of the two tRNA molecules, the mRNA and conformational changes in the ribosome. Involved in cold responses leading to freezing tolerance via the induction of cold-responsive genes. In Arabidopsis thaliana (Mouse-ear cress), this protein is Elongation factor 2.